A 183-amino-acid polypeptide reads, in one-letter code: Apo-citrate lyase phosphoribosyl-dephospho-CoA transferase (183 aa).

The protein belongs to the CitX family.

The enzyme catalyses apo-[citrate lyase ACP] + 2'-(5''-triphospho-alpha-D-ribosyl)-3'-dephospho-CoA = holo-[citrate lyase ACP] + diphosphate. Its function is as follows. Transfers 2-(5''-triphosphoribosyl)-3'-dephosphocoenzyme-A on a serine residue to the apo-acyl carrier protein (gamma chain) of the citrate lyase to yield holo-acyl carrier protein. This chain is Apo-citrate lyase phosphoribosyl-dephospho-CoA transferase, found in Escherichia coli (strain SMS-3-5 / SECEC).